Consider the following 624-residue polypeptide: DNA mismatch repair protein MutL (624 aa).

Basic and acidic residues predominate over residues 340 to 355 (NKLDTDSHSQSHERGH). Residues 340–415 (NKLDTDSHSQ…RGGATSSYRQ (76 aa)) are disordered. Polar residues-rich tracts occupy residues 372 to 383 (HQTAPSTKASTE) and 391 to 415 (SPISAVPSHTSDVQSRGGATSSYRQ).

It belongs to the DNA mismatch repair MutL/HexB family.

Functionally, this protein is involved in the repair of mismatches in DNA. It is required for dam-dependent methyl-directed DNA mismatch repair. May act as a 'molecular matchmaker', a protein that promotes the formation of a stable complex between two or more DNA-binding proteins in an ATP-dependent manner without itself being part of a final effector complex. The sequence is that of DNA mismatch repair protein MutL from Shewanella sediminis (strain HAW-EB3).